A 367-amino-acid polypeptide reads, in one-letter code: Riboflavin biosynthesis protein RibD (367 aa).

The CMP/dCMP-type deaminase domain maps to 1–123 (MQDEYYMARA…RLQQAGIDVS (123 aa)). The deaminase stretch occupies residues 1–145 (MQDEYYMARA…KGFLKRMRTG (145 aa)). Histidine 50 lines the Zn(2+) pocket. Glutamate 52 serves as the catalytic Proton donor. 2 residues coordinate Zn(2+): cysteine 75 and cysteine 84. The segment at 146–367 (FPYIQLKLGA…PDVCLHLVGA (222 aa)) is reductase. 161 to 164 (TAMA) is an NADP(+) binding site. Position 168 (serine 168) interacts with substrate. Tryptophan 170 provides a ligand contact to NADP(+). Position 184 (arginine 184) interacts with substrate. Positions 196 and 200 each coordinate NADP(+). Substrate-binding residues include leucine 204 and arginine 207. Serine 234 is an NADP(+) binding site. Substrate is bound at residue glutamate 299. 301-304 (GPTL) is an NADP(+) binding site.

The protein in the N-terminal section; belongs to the cytidine and deoxycytidylate deaminase family. It in the C-terminal section; belongs to the HTP reductase family. As to quaternary structure, homodimer. Zn(2+) serves as cofactor.

The catalysed reaction is 2,5-diamino-6-hydroxy-4-(5-phosphoribosylamino)-pyrimidine + H2O + H(+) = 5-amino-6-(5-phospho-D-ribosylamino)uracil + NH4(+). The enzyme catalyses 5-amino-6-(5-phospho-D-ribitylamino)uracil + NADP(+) = 5-amino-6-(5-phospho-D-ribosylamino)uracil + NADPH + H(+). It functions in the pathway cofactor biosynthesis; riboflavin biosynthesis; 5-amino-6-(D-ribitylamino)uracil from GTP: step 2/4. It participates in cofactor biosynthesis; riboflavin biosynthesis; 5-amino-6-(D-ribitylamino)uracil from GTP: step 3/4. Its function is as follows. Converts 2,5-diamino-6-(ribosylamino)-4(3h)-pyrimidinone 5'-phosphate into 5-amino-6-(ribosylamino)-2,4(1h,3h)-pyrimidinedione 5'-phosphate. The protein is Riboflavin biosynthesis protein RibD (ribD) of Escherichia coli (strain K12).